The chain runs to 141 residues: Large ribosomal subunit protein uL11 (141 aa).

It belongs to the universal ribosomal protein uL11 family. In terms of assembly, part of the ribosomal stalk of the 50S ribosomal subunit. Interacts with L10 and the large rRNA to form the base of the stalk. L10 forms an elongated spine to which L12 dimers bind in a sequential fashion forming a multimeric L10(L12)X complex. Post-translationally, one or more lysine residues are methylated.

Functionally, forms part of the ribosomal stalk which helps the ribosome interact with GTP-bound translation factors. The sequence is that of Large ribosomal subunit protein uL11 from Chlamydia muridarum (strain MoPn / Nigg).